Consider the following 572-residue polypeptide: Probable serine/threonine-protein kinase At1g54610 (572 aa).

A disordered region spans residues 1–89 (MGCVFGREAA…SNPSKHWRGE (89 aa)). A compositionally biased stretch (low complexity) spans 9 to 40 (AATTTTAEAKQAKSSKASSGVVVVGESSVTKS). Residues 47 to 67 (DVEKKKNEEANGDKERKSSKG) are compositionally biased toward basic and acidic residues. Residues 74-83 (KPNPRLSNPS) show a composition bias toward polar residues. The Protein kinase domain maps to 118-402 (FEKIDKIGQG…ASAALKSEFF (285 aa)). Residues 124-132 (IGQGTYSNV) and K147 contribute to the ATP site. The active-site Proton acceptor is D242. 2 disordered regions span residues 409–474 (CEPA…NVDR) and 526–572 (SSFN…AVVA). The span at 419–434 (PSKEIDAKRRDEETRR) shows a compositional bias: basic and acidic residues. The span at 554–572 (SRKKKDNTKSSKGKRAVVA) shows a compositional bias: basic residues.

The protein belongs to the protein kinase superfamily. Ser/Thr protein kinase family.

It carries out the reaction L-seryl-[protein] + ATP = O-phospho-L-seryl-[protein] + ADP + H(+). The enzyme catalyses L-threonyl-[protein] + ATP = O-phospho-L-threonyl-[protein] + ADP + H(+). The polypeptide is Probable serine/threonine-protein kinase At1g54610 (Arabidopsis thaliana (Mouse-ear cress)).